A 256-amino-acid polypeptide reads, in one-letter code: ATP synthase peripheral stalk subunit b, mitochondrial (256 aa).

The transit peptide at 1-42 (MLSRVVLSAAATAASSLKNAAFLGPGVLQATRTFHTGQPHLA) directs the protein to the mitochondrion. Residue K131 is modified to N6-succinyllysine. 6 positions are modified to N6-acetyllysine: K139, K154, K162, K221, K233, and K244.

The protein belongs to the eukaryotic ATPase B chain family. In terms of assembly, component of the ATP synthase complex composed at least of ATP5F1A/subunit alpha, ATP5F1B/subunit beta, ATP5MC1/subunit c (homooctomer), MT-ATP6/subunit a, MT-ATP8/subunit 8, ATP5ME/subunit e, ATP5MF/subunit f, ATP5MG/subunit g, ATP5MK/subunit k, ATP5MJ/subunit j, ATP5F1C/subunit gamma, ATP5F1D/subunit delta, ATP5F1E/subunit epsilon, ATP5PF/subunit F6, ATP5PB/subunit b, ATP5PD/subunit d, ATP5PO/subunit OSCP. ATP synthase complex consists of a soluble F(1) head domain (subunits alpha(3) and beta(3)) - the catalytic core - and a membrane F(0) domain - the membrane proton channel (subunits c, a, 8, e, f, g, k and j). These two domains are linked by a central stalk (subunits gamma, delta, and epsilon) rotating inside the F1 region and a stationary peripheral stalk (subunits F6, b, d, and OSCP).

The protein localises to the mitochondrion. It is found in the mitochondrion inner membrane. Its function is as follows. Subunit b, of the mitochondrial membrane ATP synthase complex (F(1)F(0) ATP synthase or Complex V) that produces ATP from ADP in the presence of a proton gradient across the membrane which is generated by electron transport complexes of the respiratory chain. ATP synthase complex consist of a soluble F(1) head domain - the catalytic core - and a membrane F(1) domain - the membrane proton channel. These two domains are linked by a central stalk rotating inside the F(1) region and a stationary peripheral stalk. During catalysis, ATP synthesis in the catalytic domain of F(1) is coupled via a rotary mechanism of the central stalk subunits to proton translocation. In vivo, can only synthesize ATP although its ATP hydrolase activity can be activated artificially in vitro. Part of the complex F(0) domain. Part of the complex F(0) domain and the peripheric stalk, which acts as a stator to hold the catalytic alpha(3)beta(3) subcomplex and subunit a/ATP6 static relative to the rotary elements. The chain is ATP synthase peripheral stalk subunit b, mitochondrial from Pongo abelii (Sumatran orangutan).